A 499-amino-acid chain; its full sequence is Tetrathionate hydrolase (499 aa).

A signal peptide spans 1–32; sequence MPSIVRNHGPHNKILLSALLLALFGWVPLASA.

This sequence belongs to the tetrathionate hydrolase family. As to quaternary structure, homodimer.

The protein localises to the cell membrane. The catalysed reaction is tetrathionate + H2O = sulfur + thiosulfate + sulfate + H(+). In terms of biological role, catalyzes the hydrolysis of tetrathionate to generate elemental sulfur, thiosulfate and sulfate. The chain is Tetrathionate hydrolase from Acidithiobacillus ferrooxidans (strain ATCC 23270 / DSM 14882 / CIP 104768 / NCIMB 8455) (Ferrobacillus ferrooxidans (strain ATCC 23270)).